The sequence spans 377 residues: 4-hydroxy-tetrahydrodipicolinate synthase 2, chloroplastic (377 aa).

The transit peptide at 1–51 (MMAAQPTANPGVRLGWKAPGALASPPRLALSRSAAAPLASHRVGRGKFSAA) directs the protein to the chloroplast. Thr120 contributes to the pyruvate binding site. Tyr206 acts as the Proton donor/acceptor in catalysis. Lys234 acts as the Schiff-base intermediate with substrate in catalysis. Residue Ile273 participates in pyruvate binding.

Belongs to the DapA family. As to quaternary structure, tetramer of modified subunits derived from two genes in different combinations.

It localises to the plastid. The protein resides in the chloroplast. It catalyses the reaction L-aspartate 4-semialdehyde + pyruvate = (2S,4S)-4-hydroxy-2,3,4,5-tetrahydrodipicolinate + H2O + H(+). The protein operates within amino-acid biosynthesis; L-lysine biosynthesis via DAP pathway; (S)-tetrahydrodipicolinate from L-aspartate: step 3/4. Its activity is regulated as follows. Sensitive to lysine inhibition. This inhibition increase in an allosteric manner with increasing concentration of the inhibitor. In terms of biological role, catalyzes the condensation of (S)-aspartate-beta-semialdehyde [(S)-ASA] and pyruvate to 4-hydroxy-tetrahydrodipicolinate (HTPA). The sequence is that of 4-hydroxy-tetrahydrodipicolinate synthase 2, chloroplastic from Triticum aestivum (Wheat).